Reading from the N-terminus, the 331-residue chain is Probable allantoicase (331 aa).

The protein belongs to the allantoicase family.

The enzyme catalyses allantoate + H2O = (S)-ureidoglycolate + urea. The protein operates within nitrogen metabolism; (S)-allantoin degradation; (S)-ureidoglycolate from allantoate (aminidohydrolase route): step 1/1. The polypeptide is Probable allantoicase (Pseudomonas syringae pv. tomato (strain ATCC BAA-871 / DC3000)).